We begin with the raw amino-acid sequence, 491 residues long: 4,4'-diapolycopen-4-al dehydrogenase (491 aa).

The active site involves glutamate 208.

Belongs to the carotenoid/retinoid oxidoreductase family. CrtN subfamily.

It catalyses the reaction all-trans-4,4'-diapolycopen-4-al + A + H2O = all-trans-4,4'-diapolycopen-4-oate + AH2 + H(+). It participates in carotenoid biosynthesis. Functionally, involved in the biosynthesis of the major C30 carotenoid methyl 4'-[6-O-(acylglycosyl)oxy]-4,4'-diapolycopen-4-oic acid via 4,4'-diapolycopen-4-oic acid intermediate. Catalyzes the oxidation of 4,4'-diapolycopen-4-al to yield 4,4'-diapolycopen-4-oic acid. This Metabacillus indicus (Bacillus indicus) protein is 4,4'-diapolycopen-4-al dehydrogenase.